The sequence spans 590 residues: EGF-like and EMI domain-containing protein 1 (590 aa).

The N-terminal stretch at 1 to 23 (MTSPLCFWCFCVWAAANWPPGSA) is a signal peptide. An EMI domain is found at 44–104 (LSRPCAQAFI…RCCPGWIQWD (61 aa)). Residues 105–145 (DEPGCFSSLSSLGTHFSGRECSYQDTRQCLCSQGFHGPHCQ) enclose the EGF-like 1 domain. 11 disulfide bridges follow: Cys109–Cys125, Cys135–Cys144, Cys168–Cys179, Cys175–Cys188, Cys190–Cys203, Cys209–Cys219, Cys215–Cys228, Cys230–Cys243, Cys249–Cys260, Cys256–Cys269, and Cys271–Cys284. An EGF-like 2; calcium-binding domain is found at 164-204 (NVDECAVVNGGCQQRCINTLGTFHCECDTGYRRHADERTCI). The EGF-like 3 domain maps to 205–244 (KTDPCAGANGCAHLCQTENGMARCACHAGYQLSEDKKACE). The EGF-like 4; calcium-binding domain occupies 245-285 (DINECAGELAPCAHHCVNSKGSFTCTCHPGFELGADRKHCY). A disordered region spans residues 393 to 424 (RLAQNPPQPFPYLDPSLTASYEDEDNDDADSE). A compositionally biased stretch (acidic residues) spans 413 to 424 (YEDEDNDDADSE). Residues 445–481 (FGLDCSLSCEDCMNGGRCQEGKSGCLCPAEWTGLICN) form the EGF-like 5 domain. 3 disulfides stabilise this stretch: Cys449–Cys462, Cys456–Cys469, and Cys471–Cys480.

The sequence is that of EGF-like and EMI domain-containing protein 1 (Egfem1) from Mus musculus (Mouse).